The chain runs to 168 residues: NADH-ubiquinone oxidoreductase chain 6 (168 aa).

A run of 5 helical transmembrane segments spans residues Met1 to Ala21, Ile27 to Leu47, Val50 to Tyr70, Val87 to Ser107, and Trp143 to Val163.

The protein belongs to the complex I subunit 6 family. As to quaternary structure, core subunit of respiratory chain NADH dehydrogenase (Complex I) which is composed of 45 different subunits.

The protein localises to the mitochondrion inner membrane. The catalysed reaction is a ubiquinone + NADH + 5 H(+)(in) = a ubiquinol + NAD(+) + 4 H(+)(out). Its function is as follows. Core subunit of the mitochondrial membrane respiratory chain NADH dehydrogenase (Complex I) which catalyzes electron transfer from NADH through the respiratory chain, using ubiquinone as an electron acceptor. Essential for the catalytic activity and assembly of complex I. The chain is NADH-ubiquinone oxidoreductase chain 6 (MT-ND6) from Didelphis virginiana (North American opossum).